Consider the following 243-residue polypeptide: Carboxy-S-adenosyl-L-methionine synthase (243 aa).

Residues Tyr35, 68 to 70, 92 to 93, and Arg199 each bind S-adenosyl-L-methionine; these read GCS and DN.

Belongs to the class I-like SAM-binding methyltransferase superfamily. Cx-SAM synthase family. In terms of assembly, homodimer.

It catalyses the reaction prephenate + S-adenosyl-L-methionine = carboxy-S-adenosyl-L-methionine + 3-phenylpyruvate + H2O. Functionally, catalyzes the conversion of S-adenosyl-L-methionine (SAM) to carboxy-S-adenosyl-L-methionine (Cx-SAM). The chain is Carboxy-S-adenosyl-L-methionine synthase from Helicobacter pylori (strain ATCC 700392 / 26695) (Campylobacter pylori).